A 1141-amino-acid polypeptide reads, in one-letter code: Putative late blight resistance protein homolog R1B-13 (1141 aa).

The stretch at 417-437 forms a coiled coil; that stretch reads DSLAFLKNQIQVIQMEFEILQ. Residues 516-742 enclose the NB-ARC domain; the sequence is TVITHTSSQL…LSIVLVADVL (227 aa). LRR repeat units lie at residues 826–851, 869–894, 992–1016, 1017–1041, and 1043–1068; these read FKFL…PYLR, LWNL…VWDM, APNL…TVDH, LKHL…VSNG, and FPQL…AFPI.

The protein belongs to the disease resistance NB-LRR family.

The protein resides in the cytoplasm. Its subcellular location is the membrane. Functionally, confers resistance to late blight (Phytophthora infestans) races carrying the avirulence gene Avr1. Resistance proteins guard the plant against pathogens that contain an appropriate avirulence protein via an indirect interaction with this avirulence protein. That triggers a defense system including the hypersensitive response, which restricts the pathogen growth. This chain is Putative late blight resistance protein homolog R1B-13 (R1B-13), found in Solanum demissum (Wild potato).